The primary structure comprises 379 residues: MLDHPLNSLGFAKPPAVTRVVVAMSGGVDSSVVAAELAAEGYDVVGVTLQLYDHGAALAKKGACCAGRDIHDARRVAETMGFPHYVLDYENTFREAVIDEFADAYLAGATPVPCIRCNERVKFKDLLQTAKDLDADCMATGHYIQRKMGPAGPELHSAADPARDQSYFLFSTTPEQLAFLRFPLGHLASKAETRALAARHGLPVADKPDSQDICFVPNGNYAEVIQKLRPGAADPGEIVDLSGRVLGEHRGVIHYTIGQRRGLGIGGLGDPLYVVRLDPERRQVIVGPKEALSTRIVPVREINWLGDAPLTSRSEWQVMAKVRSTRAPREAVIRPLSDTEAEVELIAPEDGVSPGQACVFYAPGDSRILGGGWIWRGAR.

ATP is bound by residues alanine 23 to serine 30 and leucine 49. Cysteine 117 acts as the Nucleophile in catalysis. A disulfide bridge connects residues cysteine 117 and cysteine 214. Residue glycine 141 participates in ATP binding. An interaction with tRNA region spans residues arginine 163–glutamine 165. Cysteine 214 serves as the catalytic Cysteine persulfide intermediate.

Belongs to the MnmA/TRMU family.

The protein resides in the cytoplasm. It carries out the reaction S-sulfanyl-L-cysteinyl-[protein] + uridine(34) in tRNA + AH2 + ATP = 2-thiouridine(34) in tRNA + L-cysteinyl-[protein] + A + AMP + diphosphate + H(+). In terms of biological role, catalyzes the 2-thiolation of uridine at the wobble position (U34) of tRNA, leading to the formation of s(2)U34. The chain is tRNA-specific 2-thiouridylase MnmA from Cereibacter sphaeroides (strain ATCC 17023 / DSM 158 / JCM 6121 / CCUG 31486 / LMG 2827 / NBRC 12203 / NCIMB 8253 / ATH 2.4.1.) (Rhodobacter sphaeroides).